Reading from the N-terminus, the 679-residue chain is Dihydroxyacetone phosphate acyltransferase (679 aa).

Position 11 is a phosphoserine (serine 11). Positions 161 to 166 match the HXXXXD motif motif; the sequence is HRSYID. N6-acetyllysine is present on lysine 642.

This sequence belongs to the GPAT/DAPAT family. Part of a heterotrimeric complex composed of GNPAT, AGPS and a modified form of GNPAT.

The protein resides in the peroxisome membrane. It carries out the reaction dihydroxyacetone phosphate + an acyl-CoA = a 1-acylglycerone 3-phosphate + CoA. It catalyses the reaction dihydroxyacetone phosphate + hexadecanoyl-CoA = 1-hexadecanoylglycerone 3-phosphate + CoA. Its pathway is membrane lipid metabolism; glycerophospholipid metabolism. Dihydroxyacetonephosphate acyltransferase catalyzing the first step in the biosynthesis of plasmalogens, a subset of phospholipids that differ from other glycerolipids by having an alkyl chain attached through a vinyl ether linkage at the sn-1 position of the glycerol backbone, and which unique physical properties have an impact on various aspects of cell signaling and membrane biology. The protein is Dihydroxyacetone phosphate acyltransferase of Oryctolagus cuniculus (Rabbit).